An 809-amino-acid chain; its full sequence is Endoplasmin homolog (809 aa).

The first 18 residues, 1–18 (MRKWALSCALLLVLLLTT), serve as a signal peptide directing secretion. Residues Asn111, Asp155, Asn168, and Phe200 each contribute to the ATP site. Asn111 carries N-linked (GlcNAc...) asparagine glycosylation. The segment covering 293-320 (VPADEEESNEEEESTTETTEEEETEDDE) has biased composition (acidic residues). Residues 293-329 (VPADEEESNEEEESTTETTEEEETEDDEEKKPKTKTV) are disordered. Asn410, Asn450, and Asn617 each carry an N-linked (GlcNAc...) asparagine glycan. Residues 766–809 (SLDLSPDAAVEEEEEVEEPEVEEKESAKQEAEEPEHEQYDKDEL) form a disordered region. Over residues 774–788 (AVEEEEEVEEPEVEE) the composition is skewed to acidic residues. Residues 789–809 (KESAKQEAEEPEHEQYDKDEL) show a composition bias toward basic and acidic residues. A Prevents secretion from ER motif is present at residues 806–809 (KDEL).

It belongs to the heat shock protein 90 family.

It is found in the endoplasmic reticulum lumen. May have a molecular chaperone role in the processing of secreted materials. In Hordeum vulgare (Barley), this protein is Endoplasmin homolog.